The primary structure comprises 73 residues: Sodium channel neurotoxin MeuNaTxalpha-13 (73 aa).

A signal peptide spans 1–5 (TGVES). Positions 7-71 (RDAYIAKPHN…VPIRIPGKCH (65 aa)) constitute an LCN-type CS-alpha/beta domain. 4 disulfide bridges follow: Cys-17-Cys-70, Cys-21-Cys-43, Cys-29-Cys-53, and Cys-33-Cys-55. A propeptide spans 72–73 (RR) (removed by a carboxypeptidase).

It belongs to the long (4 C-C) scorpion toxin superfamily. Sodium channel inhibitor family. Alpha subfamily. Expressed by the venom gland.

The protein localises to the secreted. In terms of biological role, alpha toxins bind voltage-independently at site-3 of sodium channels (Nav) and inhibit the inactivation of the activated channels, thereby blocking neuronal transmission. The chain is Sodium channel neurotoxin MeuNaTxalpha-13 from Mesobuthus eupeus (Lesser Asian scorpion).